A 301-amino-acid polypeptide reads, in one-letter code: Aldose reductase (301 aa).

NADP(+) is bound at residue 11–20 (GKEIPTVGLG). Tyr-51 (proton donor) is an active-site residue. Substrate is bound at residue His-111. NADP(+) is bound at residue 209 to 266 (SSLGSAPGSSAKVRDDKTIKAIAKKYGCAPSQIILSYITAQGICVIPKSRSKEHLREN).

The protein belongs to the aldo/keto reductase family.

It is found in the cytoplasm. The enzyme catalyses an alditol + NAD(+) = an aldose + NADH + H(+). The catalysed reaction is an alditol + NADP(+) = an aldose + NADPH + H(+). In terms of biological role, catalyzes the NADPH-dependent reduction of a wide variety of carbonyl-containing compounds to their corresponding alcohols with a broad range of catalytic efficiencies. This chain is Aldose reductase, found in Encephalitozoon cuniculi (strain GB-M1) (Microsporidian parasite).